We begin with the raw amino-acid sequence, 452 residues long: Cobyrinate a,c-diamide synthase (452 aa).

Positions 244–437 (KIAYAYDEAF…VHINLYTYKE (194 aa)) constitute a GATase cobBQ-type domain. Residue Cys327 is the Nucleophile of the active site.

The protein belongs to the CobB/CbiA family. Requires Mg(2+) as cofactor.

The enzyme catalyses cob(II)yrinate + 2 L-glutamine + 2 ATP + 2 H2O = cob(II)yrinate a,c diamide + 2 L-glutamate + 2 ADP + 2 phosphate + 2 H(+). Its pathway is cofactor biosynthesis; adenosylcobalamin biosynthesis; cob(II)yrinate a,c-diamide from sirohydrochlorin (anaerobic route): step 10/10. Functionally, catalyzes the ATP-dependent amidation of the two carboxylate groups at positions a and c of cobyrinate, using either L-glutamine or ammonia as the nitrogen source. This chain is Cobyrinate a,c-diamide synthase, found in Caldanaerobacter subterraneus subsp. tengcongensis (strain DSM 15242 / JCM 11007 / NBRC 100824 / MB4) (Thermoanaerobacter tengcongensis).